Consider the following 125-residue polypeptide: Small ribosomal subunit protein uS12 (125 aa).

A 3-methylthioaspartic acid modification is found at aspartate 89. The disordered stretch occupies residues 106 to 125 (GVKDRKQSRSKYGAKRPKKA). A compositionally biased stretch (basic residues) spans 113–125 (SRSKYGAKRPKKA).

Belongs to the universal ribosomal protein uS12 family. As to quaternary structure, part of the 30S ribosomal subunit. Contacts proteins S8 and S17. May interact with IF1 in the 30S initiation complex.

Its function is as follows. With S4 and S5 plays an important role in translational accuracy. Interacts with and stabilizes bases of the 16S rRNA that are involved in tRNA selection in the A site and with the mRNA backbone. Located at the interface of the 30S and 50S subunits, it traverses the body of the 30S subunit contacting proteins on the other side and probably holding the rRNA structure together. The combined cluster of proteins S8, S12 and S17 appears to hold together the shoulder and platform of the 30S subunit. In Azoarcus sp. (strain BH72), this protein is Small ribosomal subunit protein uS12.